Here is a 107-residue protein sequence, read N- to C-terminus: Large ribosomal subunit protein eL33A (107 aa).

Ala2 bears the N-acetylalanine; partial mark. A Glycyl lysine isopeptide (Lys-Gly) (interchain with G-Cter in ubiquitin) cross-link involves residue Lys47.

The protein belongs to the eukaryotic ribosomal protein eL33 family. Component of the large ribosomal subunit (LSU). Mature yeast ribosomes consist of a small (40S) and a large (60S) subunit. The 40S small subunit contains 1 molecule of ribosomal RNA (18S rRNA) and 33 different proteins (encoded by 57 genes). The large 60S subunit contains 3 rRNA molecules (25S, 5.8S and 5S rRNA) and 46 different proteins (encoded by 81 genes). Post-translationally, N-terminally acetylated by acetyltransferase NatA.

It is found in the cytoplasm. Its function is as follows. Component of the ribosome, a large ribonucleoprotein complex responsible for the synthesis of proteins in the cell. The small ribosomal subunit (SSU) binds messenger RNAs (mRNAs) and translates the encoded message by selecting cognate aminoacyl-transfer RNA (tRNA) molecules. The large subunit (LSU) contains the ribosomal catalytic site termed the peptidyl transferase center (PTC), which catalyzes the formation of peptide bonds, thereby polymerizing the amino acids delivered by tRNAs into a polypeptide chain. The nascent polypeptides leave the ribosome through a tunnel in the LSU and interact with protein factors that function in enzymatic processing, targeting, and the membrane insertion of nascent chains at the exit of the ribosomal tunnel. The chain is Large ribosomal subunit protein eL33A from Saccharomyces cerevisiae (strain ATCC 204508 / S288c) (Baker's yeast).